Here is a 145-residue protein sequence, read N- to C-terminus: D-aminoacyl-tRNA deacylase (145 aa).

The short motif at Gly137–Pro138 is the Gly-cisPro motif, important for rejection of L-amino acids element.

This sequence belongs to the DTD family. In terms of assembly, homodimer.

It localises to the cytoplasm. The enzyme catalyses glycyl-tRNA(Ala) + H2O = tRNA(Ala) + glycine + H(+). It carries out the reaction a D-aminoacyl-tRNA + H2O = a tRNA + a D-alpha-amino acid + H(+). In terms of biological role, an aminoacyl-tRNA editing enzyme that deacylates mischarged D-aminoacyl-tRNAs. Also deacylates mischarged glycyl-tRNA(Ala), protecting cells against glycine mischarging by AlaRS. Acts via tRNA-based rather than protein-based catalysis; rejects L-amino acids rather than detecting D-amino acids in the active site. By recycling D-aminoacyl-tRNA to D-amino acids and free tRNA molecules, this enzyme counteracts the toxicity associated with the formation of D-aminoacyl-tRNA entities in vivo and helps enforce protein L-homochirality. The chain is D-aminoacyl-tRNA deacylase from Psychromonas ingrahamii (strain DSM 17664 / CCUG 51855 / 37).